The sequence spans 242 residues: tRNA (guanine-N(1)-)-methyltransferase (242 aa).

S-adenosyl-L-methionine-binding positions include G111 and I130–L135.

This sequence belongs to the RNA methyltransferase TrmD family. Homodimer.

The protein localises to the cytoplasm. The enzyme catalyses guanosine(37) in tRNA + S-adenosyl-L-methionine = N(1)-methylguanosine(37) in tRNA + S-adenosyl-L-homocysteine + H(+). In terms of biological role, specifically methylates guanosine-37 in various tRNAs. This is tRNA (guanine-N(1)-)-methyltransferase from Aster yellows witches'-broom phytoplasma (strain AYWB).